The following is a 941-amino-acid chain: Coiled-coil domain-containing protein 39 (941 aa).

4 coiled-coil regions span residues 16–122 (AIPV…ENGI), 164–273 (AQQD…ESEI), 306–605 (QLKG…EIKV), and 665–825 (IKAA…EEQD). A disordered region spans residues 868 to 941 (PTASTKGSRQ…SNVKSKKSSK (74 aa)). 2 stretches are compositionally biased toward low complexity: residues 871-903 (STKG…SQSS) and 914-934 (SSSL…SSNV). Phosphoserine is present on residues S892 and S900.

The protein belongs to the CCDC39 family. As to expression, mainly expressed in nasal brushings and, to a lesser extent, in lungs and testis.

It is found in the cytoplasm. The protein localises to the cytoskeleton. Its subcellular location is the cilium axoneme. Functionally, required for assembly of dynein regulatory complex (DRC) and inner dynein arm (IDA) complexes, which are responsible for ciliary beat regulation, thereby playing a central role in motility in cilia and flagella. Probably acts together with CCDC40 to form a molecular ruler that determines the 96 nanometer (nm) repeat length and arrangements of components in cilia and flagella. Not required for outer dynein arm complexes assembly. The protein is Coiled-coil domain-containing protein 39 of Homo sapiens (Human).